Reading from the N-terminus, the 349-residue chain is Phosphoribosylformylglycinamidine cyclo-ligase (349 aa).

Belongs to the AIR synthase family.

The protein resides in the cytoplasm. It carries out the reaction 2-formamido-N(1)-(5-O-phospho-beta-D-ribosyl)acetamidine + ATP = 5-amino-1-(5-phospho-beta-D-ribosyl)imidazole + ADP + phosphate + H(+). The protein operates within purine metabolism; IMP biosynthesis via de novo pathway; 5-amino-1-(5-phospho-D-ribosyl)imidazole from N(2)-formyl-N(1)-(5-phospho-D-ribosyl)glycinamide: step 2/2. The polypeptide is Phosphoribosylformylglycinamidine cyclo-ligase (Lactobacillus delbrueckii subsp. bulgaricus (strain ATCC BAA-365 / Lb-18)).